We begin with the raw amino-acid sequence, 208 residues long: Small ribosomal subunit protein uS4 (208 aa).

Residues 98–163 (TRLDNVVFRL…TPLFKEIVDG (66 aa)) form the S4 RNA-binding domain.

Belongs to the universal ribosomal protein uS4 family. As to quaternary structure, part of the 30S ribosomal subunit. Contacts protein S5. The interaction surface between S4 and S5 is involved in control of translational fidelity.

Functionally, one of the primary rRNA binding proteins, it binds directly to 16S rRNA where it nucleates assembly of the body of the 30S subunit. With S5 and S12 plays an important role in translational accuracy. The chain is Small ribosomal subunit protein uS4 from Heliobacterium modesticaldum (strain ATCC 51547 / Ice1).